The following is an 842-amino-acid chain: MDIRKAYLDFFASKRHEITPSSPLVPDDATLLFTNAGMVPFKSIFTGEIPRPNPPRKTSCQTCIRAGGKHNDLDNVGYTARHHTFFEMLGNFSFGDYFKEQAIAYAWEFVTEVLKLPKDRLYITVHENDDEAFNLWQKHIQKERIYKFGDKDNFWQMGDTGPCGPCSEIFYDQGQEHFNSSEDYMGGDGDRFLEIWNLVFMQYERSANGVLSPLPKPSIDTGMGLERVTAIKEGKFSNFDSSLFMPIINEISKLCNKTYVYESGASFRVIADHIRSSVFLLAQGVSFDKEGRGYVLRRILRRALRHGYLLGFKQAFMYKLVDIVCDLMGGHYTYLNEKKDSIKEQIRFEEERFLSTIENGIEIFNEELKNTKEIFSGEVAFKLYDTYGFPLDLTADMLREKNLKVDEEKFELLMNEQKARAKASWKGSGDKTVSGDFKNLLEKFGENHFVGYEKAECESKILALLDEDFKEVSTLKDAGWVMLENTPFYATSGGQSADSGFIAKREVLDTQKFFNLNLSFIKAGEELKVGTIAHARIDAEKREQIARHHSATHLLHHALREILGSHVSQAGSLVESNKLRFDFTHHKALSKEELESIEKRVNEMIINSSEAILENMPLEEAKKSGAIALFNEKYQGNVRVLTLGESKELCGGTHVKNTAQIGSFYIVKESGVSAGVRRIEAVVSKAALEFVKNQLEGLSKAKDELKNNDILSGVKKLKNEILSLKNELKNSSKTELDSKNIQGVEICVKRVDNGDIKAMIDDFKNKFAKAVILLIQVKDEKITLAAGVKDAPLKAGALVKEAAQILGGNGGGRDDFATAGGKDLSKIDEALKQSLETIEKAL.

Positions 549, 553, 650, and 654 each coordinate Zn(2+).

The protein belongs to the class-II aminoacyl-tRNA synthetase family. The cofactor is Zn(2+).

Its subcellular location is the cytoplasm. The enzyme catalyses tRNA(Ala) + L-alanine + ATP = L-alanyl-tRNA(Ala) + AMP + diphosphate. Its function is as follows. Catalyzes the attachment of alanine to tRNA(Ala) in a two-step reaction: alanine is first activated by ATP to form Ala-AMP and then transferred to the acceptor end of tRNA(Ala). Also edits incorrectly charged Ser-tRNA(Ala) and Gly-tRNA(Ala) via its editing domain. This chain is Alanine--tRNA ligase, found in Campylobacter jejuni subsp. doylei (strain ATCC BAA-1458 / RM4099 / 269.97).